The primary structure comprises 898 residues: Inner centromere protein (898 aa).

8 disordered regions span residues 50 to 127 (AEPE…TRAR), 251 to 282 (PANE…SVRR), 358 to 379 (ETAP…RRSL), 406 to 470 (MVAM…PPPH), 525 to 548 (KEEA…EELK), 564 to 677 (RVEQ…RQRE), 707 to 770 (ERAA…PVMN), and 802 to 824 (NYGM…KPIP). Residues 60 to 69 (SQKRRRKKRT) are compositionally biased toward basic residues. Low complexity predominate over residues 90 to 99 (SANWSNSVRR). Polar residues predominate over residues 259–272 (QPLNLTNQSVTPTG). 2 stretches are compositionally biased toward basic and acidic residues: residues 367–376 (EEAHTIESPR) and 431–449 (RAVD…ERSP). Residues 455–470 (PSPPCPPSKIVKPPPH) are compositionally biased toward pro residues. The segment at 512 to 730 (KEKERQRLDA…EERKKREQQE (219 aa)) is SAH. 3 stretches are compositionally biased toward basic and acidic residues: residues 564–600 (RVEQ…EEKA), 607–677 (KKQE…RQRE), and 707–759 (ERAA…KAKE). The segment at 807-881 (LNSDDSTDDE…RTSSAVWHSP (75 aa)) is IN box. Ser-874 and Ser-875 each carry phosphoserine.

Belongs to the INCENP family. Component of the CPC at least composed of survivin/birc5, incenp, cdca8/borealin and/or cdca9/dasra-A, and aurkb/aurora-B. Interacts (via C-terminus) with aurkb (via N-terminus and kinase domain). Interacts (via N-terminus) with birc5.1, birc5.2, cdca8 and cdca9. Interacts with mtus1.

The protein localises to the nucleus. The protein resides in the chromosome. It is found in the centromere. Its subcellular location is the cytoplasm. It localises to the cytoskeleton. The protein localises to the spindle. The protein resides in the midbody. It is found in the kinetochore. Its function is as follows. Component of the chromosomal passenger complex (CPC), a complex that acts as a key regulator of mitosis. The CPC complex has essential functions at the centromere in ensuring correct chromosome alignment and segregation and is required for chromatin-induced microtubule stabilization and spindle assembly. Acts as a scaffold regulating CPC localization and activity. The C-terminus associates with aurkb/aurora-B, the N-terminus associated with cdca8/borealin and/or cdca9/dasra-A tethers the CPC to the inner centromere, and the microtubule binding activity within the central SAH domain directs aurkb/aurora-B toward substrates near microtubules. Activates aurkb. In Xenopus tropicalis (Western clawed frog), this protein is Inner centromere protein (incenp).